We begin with the raw amino-acid sequence, 209 residues long: MENLPKINHFRDLIKTLNIQIKNKQHGLISIEKQLSVAIDNVENLCLIRNKLKTDIENLLENKIDVENKLLVLRNQTEYIVSSTVKTVVKKFGVVPDINRLDQCIRYLIMTFHPILNPRKPTTDELIKLGPEKIILKAHEFYNNILVMNSGPHVFFHTHDNYQLCEWDGKSTKCKCGSTCVFWCIEECNLLTDISLSCKNPIGYAKCGF.

Positions asparagine 41–glutamine 76 form a coiled coil.

This is an uncharacterized protein from Acanthamoeba polyphaga (Amoeba).